Reading from the N-terminus, the 137-residue chain is Phosphoribosyl-AMP cyclohydrolase (137 aa).

Residue D84 coordinates Mg(2+). C85 provides a ligand contact to Zn(2+). The Mg(2+) site is built by D86 and D88. 2 residues coordinate Zn(2+): C101 and C108.

This sequence belongs to the PRA-CH family. Homodimer. It depends on Mg(2+) as a cofactor. Requires Zn(2+) as cofactor.

It localises to the cytoplasm. It carries out the reaction 1-(5-phospho-beta-D-ribosyl)-5'-AMP + H2O = 1-(5-phospho-beta-D-ribosyl)-5-[(5-phospho-beta-D-ribosylamino)methylideneamino]imidazole-4-carboxamide. It participates in amino-acid biosynthesis; L-histidine biosynthesis; L-histidine from 5-phospho-alpha-D-ribose 1-diphosphate: step 3/9. Functionally, catalyzes the hydrolysis of the adenine ring of phosphoribosyl-AMP. This chain is Phosphoribosyl-AMP cyclohydrolase, found in Prosthecochloris aestuarii (strain DSM 271 / SK 413).